We begin with the raw amino-acid sequence, 121 residues long: Large ribosomal subunit protein uL18 (121 aa).

Positions 1–25 (MKIVISKPDKNKIRQKRHRRVRGKL) are disordered. Residues 13 to 23 (IRQKRHRRVRG) are compositionally biased toward basic residues.

This sequence belongs to the universal ribosomal protein uL18 family. As to quaternary structure, part of the 50S ribosomal subunit; part of the 5S rRNA/L5/L18/L25 subcomplex. Contacts the 5S and 23S rRNAs.

Its function is as follows. This is one of the proteins that bind and probably mediate the attachment of the 5S RNA into the large ribosomal subunit, where it forms part of the central protuberance. This is Large ribosomal subunit protein uL18 from Streptococcus pyogenes serotype M28 (strain MGAS6180).